The chain runs to 336 residues: N-acetyl-gamma-glutamyl-phosphate reductase (336 aa).

Cysteine 156 is an active-site residue.

The protein belongs to the NAGSA dehydrogenase family. Type 1 subfamily.

It localises to the cytoplasm. The catalysed reaction is N-acetyl-L-glutamate 5-semialdehyde + phosphate + NADP(+) = N-acetyl-L-glutamyl 5-phosphate + NADPH + H(+). Its pathway is amino-acid biosynthesis; L-arginine biosynthesis; N(2)-acetyl-L-ornithine from L-glutamate: step 3/4. In terms of biological role, catalyzes the NADPH-dependent reduction of N-acetyl-5-glutamyl phosphate to yield N-acetyl-L-glutamate 5-semialdehyde. The chain is N-acetyl-gamma-glutamyl-phosphate reductase from Moritella abyssi.